Consider the following 90-residue polypeptide: Small ribosomal subunit protein bS16 (90 aa).

It belongs to the bacterial ribosomal protein bS16 family.

In Heliobacterium modesticaldum (strain ATCC 51547 / Ice1), this protein is Small ribosomal subunit protein bS16.